We begin with the raw amino-acid sequence, 202 residues long: NADH:(hydroxy)cinnamate reductase subunit CrdA (202 aa).

The protein belongs to the NADH-dependent flavin reductase family. In terms of assembly, NADH:(hydroxy)cinnamate reductase Crd is a heterodimer composed of CrdA and CrdB subunits, encoded by adjacent genes. Requires FMN as cofactor.

Functionally, component of the NADH:(hydroxy)cinnamate reductase. CrdA is probably reduced by NADH and then transfers the electrons to the catalytic center of CrdB. Is likely involved in protecting V.ruber from (hydroxy)cinnamate poisoning. The sequence is that of NADH:(hydroxy)cinnamate reductase subunit CrdA from Vibrio ruber (strain DSM 16370 / JCM 11486 / BCRC 17186 / CECT 7878 / LMG 23124 / VR1).